We begin with the raw amino-acid sequence, 248 residues long: Deoxyribose-phosphate aldolase (248 aa).

D117 serves as the catalytic Proton donor/acceptor. The Schiff-base intermediate with acetaldehyde role is filled by K179. The active-site Proton donor/acceptor is the K208.

Belongs to the DeoC/FbaB aldolase family. DeoC type 1 subfamily.

It is found in the cytoplasm. The catalysed reaction is 2-deoxy-D-ribose 5-phosphate = D-glyceraldehyde 3-phosphate + acetaldehyde. The protein operates within carbohydrate degradation; 2-deoxy-D-ribose 1-phosphate degradation; D-glyceraldehyde 3-phosphate and acetaldehyde from 2-deoxy-alpha-D-ribose 1-phosphate: step 2/2. Functionally, catalyzes a reversible aldol reaction between acetaldehyde and D-glyceraldehyde 3-phosphate to generate 2-deoxy-D-ribose 5-phosphate. This is Deoxyribose-phosphate aldolase from Thermotoga maritima (strain ATCC 43589 / DSM 3109 / JCM 10099 / NBRC 100826 / MSB8).